The sequence spans 709 residues: D-(-)-3-hydroxybutyrate oligomer hydrolase (709 aa).

Residues methionine 1–alanine 26 form the signal peptide. The disordered stretch occupies residues glycine 58–proline 77. Serine 305 (charge relay system) is an active-site residue.

This sequence belongs to the D-(-)-3-hydroxybutyrate oligomer hydrolase family.

Its subcellular location is the secreted. It catalyses the reaction (3R)-hydroxybutanoate dimer + H2O = 2 (R)-3-hydroxybutanoate + H(+). Its pathway is lipid metabolism; butanoate metabolism. Functionally, participates in the degradation of poly-3-hydroxybutyrate (PHB). It works downstream of poly(3-hydroxybutyrate) depolymerase, hydrolyzing D(-)-3-hydroxybutyrate oligomers of various length (3HB-oligomers) into 3HB-monomers. This chain is D-(-)-3-hydroxybutyrate oligomer hydrolase, found in Paracidovorax citrulli (strain AAC00-1) (Acidovorax citrulli).